A 250-amino-acid polypeptide reads, in one-letter code: Triosephosphate isomerase (250 aa).

Substrate is bound at residue 9-11; it reads NWK. H94 serves as the catalytic Electrophile. Residue E166 is the Proton acceptor of the active site. Residues G172, S212, and 233 to 234 each bind substrate; that span reads GG.

It belongs to the triosephosphate isomerase family. Homodimer.

It localises to the cytoplasm. The enzyme catalyses D-glyceraldehyde 3-phosphate = dihydroxyacetone phosphate. It functions in the pathway carbohydrate biosynthesis; gluconeogenesis. The protein operates within carbohydrate degradation; glycolysis; D-glyceraldehyde 3-phosphate from glycerone phosphate: step 1/1. Its function is as follows. Involved in the gluconeogenesis. Catalyzes stereospecifically the conversion of dihydroxyacetone phosphate (DHAP) to D-glyceraldehyde-3-phosphate (G3P). In Clostridium novyi (strain NT), this protein is Triosephosphate isomerase.